We begin with the raw amino-acid sequence, 451 residues long: POU domain, class 3, transcription factor 1 (451 aa).

5 disordered regions span residues 1–21 (MATTAQYLPRGPGGGAGGTGP), 69–114 (AHPQ…GFHA), 134–154 (AHHLGPAMSPSPGAGGGHQPQ), 186–253 (GLHH…PSSD), and 395–451 (KRMT…GSVQ). Gly residues-rich tracts occupy residues 11–20 (GPGGGAGGTG), 76–85 (TGGGGGGDWA), and 95–112 (AGGGSTGRADDGGGGGGF). Low complexity predominate over residues 134-145 (AHHLGPAMSPSP). Basic and acidic residues predominate over residues 190 to 199 (ALHEDGHEAQ). Over residues 220–232 (AGGLHAAAAHLHP) the composition is skewed to low complexity. In terms of domain architecture, POU-specific spans 247 to 321 (EDAPSSDDLE…LLNKWLEETD (75 aa)). The homeobox DNA-binding region spans 339-398 (KRKKRTSIEVGVKGALESHFLKCPKPSAHEITGLADSLQLEKEVVRVWFCNRRQKEKRMT). The segment covering 427 to 436 (PSAPPPPPPA) has biased composition (pro residues).

This sequence belongs to the POU transcription factor family. Class-3 subfamily. Neural tissues and testis.

It is found in the nucleus. Transcription factor that binds to the octamer motif (5'-ATTTGCAT-3'). Acts as a transcriptional activator when binding cooperatively with SOX4, SOX11, or SOX12 to gene promoters. Acts as a transcriptional repressor of myelin-specific genes. This chain is POU domain, class 3, transcription factor 1 (Pou3f1), found in Rattus norvegicus (Rat).